Consider the following 354-residue polypeptide: NADH-quinone oxidoreductase subunit H (354 aa).

The next 8 helical transmembrane spans lie at 25–45, 91–111, 126–146, 170–190, 205–225, 257–277, 290–310, and 330–350; these read LVRI…LILW, WVYL…WAVI, LLYA…AGWA, MGFA…SDIV, FLSW…VSGI, LFFL…SILF, FIPG…VFIW, and VFLP…MSPL.

It belongs to the complex I subunit 1 family. In terms of assembly, NDH-1 is composed of 14 different subunits. Subunits NuoA, H, J, K, L, M, N constitute the membrane sector of the complex.

It is found in the cell inner membrane. The enzyme catalyses a quinone + NADH + 5 H(+)(in) = a quinol + NAD(+) + 4 H(+)(out). Its function is as follows. NDH-1 shuttles electrons from NADH, via FMN and iron-sulfur (Fe-S) centers, to quinones in the respiratory chain. The immediate electron acceptor for the enzyme in this species is believed to be ubiquinone. Couples the redox reaction to proton translocation (for every two electrons transferred, four hydrogen ions are translocated across the cytoplasmic membrane), and thus conserves the redox energy in a proton gradient. This subunit may bind ubiquinone. The polypeptide is NADH-quinone oxidoreductase subunit H (Paraburkholderia phymatum (strain DSM 17167 / CIP 108236 / LMG 21445 / STM815) (Burkholderia phymatum)).